Consider the following 347-residue polypeptide: Haptoglobin (347 aa).

The first 18 residues, 1-18, serve as a signal peptide directing secretion; sequence MRALGAVVTLLLWGQLFA. Residues 31-88 form the Sushi domain; that stretch reads DSCPKPPEIANGYVEHLVRYRCRQFYRLRTEGDGVYTLNDEKQWVNTAAGEKLPECEA. Cystine bridges form between Cys-52–Cys-86, Cys-90–Cys-207, Cys-250–Cys-281, and Cys-292–Cys-322. One can recognise a Peptidase S1 domain in the interval 103–345; the sequence is IIGGSMDAKG…LKDWVQETMA (243 aa). 4 N-linked (GlcNAc...) asparagine glycosylation sites follow: Asn-148, Asn-182, Asn-256, and Asn-264. An interaction with CD163 region spans residues 259-264; the sequence is VPEKKN.

This sequence belongs to the peptidase S1 family. Tetramer of two alpha and two beta chains; disulfide-linked. The hemoglobin/haptoglobin complex is composed of a haptoglobin dimer bound to two hemoglobin alpha-beta dimers. Interacts with CD163. Interacts with ERGIC3. In terms of tissue distribution, expressed by the liver and secreted in plasma.

The protein localises to the secreted. In terms of biological role, as a result of hemolysis, hemoglobin is found to accumulate in the kidney and is secreted in the urine. Haptoglobin captures, and combines with free plasma hemoglobin to allow hepatic recycling of heme iron and to prevent kidney damage. Haptoglobin also acts as an antioxidant, has antibacterial activity and plays a role in modulating many aspects of the acute phase response. Hemoglobin/haptoglobin complexes are rapidly cleared by the macrophage CD163 scavenger receptor expressed on the surface of liver Kupfer cells through an endocytic lysosomal degradation pathway. This is Haptoglobin (Hp) from Mus saxicola (Brown spiny mouse).